We begin with the raw amino-acid sequence, 179 residues long: ATP-dependent protease subunit HslV (179 aa).

Threonine 7 is a catalytic residue. Na(+) contacts are provided by glycine 162, cysteine 165, and threonine 168.

This sequence belongs to the peptidase T1B family. HslV subfamily. As to quaternary structure, a double ring-shaped homohexamer of HslV is capped on each side by a ring-shaped HslU homohexamer. The assembly of the HslU/HslV complex is dependent on binding of ATP.

The protein resides in the cytoplasm. It carries out the reaction ATP-dependent cleavage of peptide bonds with broad specificity.. Its activity is regulated as follows. Allosterically activated by HslU binding. In terms of biological role, protease subunit of a proteasome-like degradation complex believed to be a general protein degrading machinery. The protein is ATP-dependent protease subunit HslV of Bordetella pertussis (strain Tohama I / ATCC BAA-589 / NCTC 13251).